The sequence spans 1707 residues: Histone-lysine N-methyltransferase SETD1A (1707 aa).

The interaction with WDR82 stretch occupies residues Leu-60–Gly-89. Positions Asp-84–Lys-172 constitute an RRM domain. 7 disordered regions span residues Pro-194–Ala-308, Thr-331–Asp-363, Ser-381–Ser-486, Leu-506–His-655, Ala-834–Lys-854, Pro-891–Val-1251, and Ala-1264–Leu-1293. Polar residues predominate over residues Asn-239–Gly-277. 2 stretches are compositionally biased toward low complexity: residues Ser-278–Ser-295 and Thr-331–Ser-357. A compositionally biased stretch (pro residues) spans Ser-430 to Pro-440. Phosphoserine occurs at positions 459 and 464. Residues Ser-459 to Pro-473 are compositionally biased toward low complexity. A compositionally biased stretch (polar residues) spans Glu-474 to Ser-486. Phosphoserine is present on residues Ser-508 and Ser-565. The span at Ala-568–Ser-578 shows a compositional bias: polar residues. Pro residues-rich tracts occupy residues Ser-593–Tyr-617 and Gly-624–His-655. Positions Gln-844–Lys-854 are enriched in basic and acidic residues. Residue Ser-915 is modified to Phosphoserine. 2 stretches are compositionally biased toward acidic residues: residues Ala-918–Gln-927 and Lys-976–Glu-992. The segment covering Ala-993–Glu-1002 has biased composition (basic and acidic residues). Residues Val-1003 to Asp-1012 show a composition bias toward acidic residues. Residues Asp-1032–Ser-1060 show a composition bias toward low complexity. The span at Ala-1077–Val-1094 shows a compositional bias: pro residues. At Ser-1103 the chain carries Phosphoserine. A compositionally biased stretch (pro residues) spans Pro-1127–Pro-1145. The span at Glu-1275–Asp-1284 shows a compositional bias: acidic residues. An HCFC1-binding motif (HBM) motif is present at residues Glu-1299–Ala-1303. 2 disordered regions span residues Lys-1307–Pro-1417 and Asn-1472–Tyr-1499. Residues Pro-1308–Ala-1323 show a composition bias toward pro residues. Positions Glu-1360–Ser-1377 are enriched in acidic residues. Residues Arg-1390–Pro-1403 are compositionally biased toward basic residues. Residues Pro-1404–Ala-1414 are compositionally biased toward pro residues. Residues Tyr-1415–Leu-1450 are interaction with CFP1. The segment at Leu-1450 to Arg-1537 is interaction with ASH2L, RBBP5 and WDR5. A WDR5 interaction motif (WIN) motif is present at residues Gly-1492–Glu-1497. Residues Arg-1537 to Arg-1542 carry the RxxxRR motif motif. The 118-residue stretch at Lys-1568–Lys-1685 folds into the SET domain. Residue Tyr-1684 coordinates S-adenosyl-L-methionine. One can recognise a Post-SET domain in the interval Asn-1691 to Asn-1707.

It belongs to the class V-like SAM-binding methyltransferase superfamily. Component of the SET1A/COMPASS complex composed of the catalytic subunit SETD1A, WDR5, WDR82, RBBP5, ASH2L/ASH2, CXXC1/CFP1, HCFC1 and DPY30 homotrimer. Forms a core complex with the evolutionary conserved subcomplex WRAD composed of WDR5, RBBP5, ASH2L/ASH2 and DPY30 subunits; WRAD differentially stimulates the methyltransferase activity. Interacts with BOD1L1 (via COMPASS-Shg1 domain) at replication forks. Interacts with HCFC1. Interacts with ASH2/ASH2L. Interacts with CXXC1/CFP1. Interacts with RBBP5. Interacts (via N-terminal region) with WDR82; the interaction is direct. Interacts (via the RRM domain) with hyperphosphorylated C-terminal domain (CTD) of RNA polymerase II large subunit (POLR2A) only in the presence of WDR82. Binds specifically to CTD heptad repeats phosphorylated on 'Ser-5' of each heptad. Interacts with ZNF335. Interacts with SUPT6H. Interacts with NAP1L1. Interacts (via WIN motif) with WDR5.

Its subcellular location is the nucleus speckle. The protein localises to the chromosome. It localises to the cytoplasm. The catalysed reaction is L-lysyl(4)-[histone H3] + S-adenosyl-L-methionine = N(6)-methyl-L-lysyl(4)-[histone H3] + S-adenosyl-L-homocysteine + H(+). It carries out the reaction N(6)-methyl-L-lysyl(4)-[histone H3] + S-adenosyl-L-methionine = N(6),N(6)-dimethyl-L-lysyl(4)-[histone H3] + S-adenosyl-L-homocysteine + H(+). The enzyme catalyses N(6),N(6)-dimethyl-L-lysyl(4)-[histone H3] + S-adenosyl-L-methionine = N(6),N(6),N(6)-trimethyl-L-lysyl(4)-[histone H3] + S-adenosyl-L-homocysteine + H(+). In terms of biological role, histone methyltransferase that catalyzes methyl group transfer from S-adenosyl-L-methionine to the epsilon-amino group of 'Lys-4' of histone H3 (H3K4) via a non-processive mechanism. Part of chromatin remodeling machinery, forms H3K4me1, H3K4me2 and H3K4me3 methylation marks at active chromatin sites where transcription and DNA repair take place. Responsible for H3K4me3 enriched promoters and transcriptional programming of inner mass stem cells and neuron progenitors during embryogenesis. Required for H3K4me1 mark at stalled replication forks. Mediates FANCD2-dependent nucleosome remodeling and RAD51 nucleofilaments stabilization at reversed forks, protecting them from nucleolytic degradation. Does not methylate 'Lys-4' of histone H3 if the neighboring 'Lys-9' residue is already methylated. Binds RNAs involved in RNA processing and the DNA damage response. The sequence is that of Histone-lysine N-methyltransferase SETD1A (SETD1A) from Homo sapiens (Human).